A 601-amino-acid polypeptide reads, in one-letter code: Glutathione-regulated potassium-efflux system protein KefB (601 aa).

The next 13 helical transmembrane spans lie at 4–24 (ADLL…VPLA), 29–49 (IGAV…GLGF), 55–75 (EILH…GLEL), 87–107 (IFGV…GLLM), 111–131 (FLWQ…TAMA), 152–172 (VLLF…LLAG), 177–197 (HFDW…LIGG), 207–227 (FIAA…LVLS), 230–250 (LFMD…GVLL), 262–282 (AIDP…GMSL), 284–304 (LGVL…LVVI), 324–344 (MQFA…FSTA), and 356–376 (ALLL…MKGI). One can recognise an RCK N-terminal domain in the interval 400–519 (KPQVIVVGFG…AGVTQFSRET (120 aa)).

This sequence belongs to the monovalent cation:proton antiporter 2 (CPA2) transporter (TC 2.A.37) family. KefB subfamily. In terms of assembly, interacts with the regulatory subunit KefG.

Its subcellular location is the cell inner membrane. In terms of biological role, pore-forming subunit of a potassium efflux system that confers protection against electrophiles. Catalyzes K(+)/H(+) antiport. In Salmonella paratyphi A (strain ATCC 9150 / SARB42), this protein is Glutathione-regulated potassium-efflux system protein KefB.